Consider the following 424-residue polypeptide: MEKQCCSHPVICSLSTMYTFLLGAIFIALSSSRILLVKYSANEENKYDYLPTTANVCSELVKLVFCVLVSFCVIKKDHQSRNLKYASWKEFSNFMKWSIPAFLYFLDNLIVFYVLSYLQPAMAVIFSNFSIITTALLFRIVLKRRLNWIQWASLLILFLSIVALTAGTKTLQHNLAGHGFHHDAFFSPSNSCLLFRSECPRKDNCTAKEWTFPEAKWNTTARVFSHIRLGMGHVLIIVQCFISSMANIYNEKILKEGNQLAESIFIQNSKLYFFGILFNGLTLGLQRSNRDQIKNCGFFYGHNAFSVALIFVTAFQGLSVAFILKFLDNMFHVLMAQVTTVIITTVSVLVFDFRPSLEFFLEAPSVLLSIFIYNASKPQGPEYAPRQERIRDLSGNLWERSSGDGEELERLTKPKSDESDEDTF.

The Cytoplasmic portion of the chain corresponds to 1 to 8; that stretch reads MEKQCCSH. Residues 9–29 traverse the membrane as a helical segment; sequence PVICSLSTMYTFLLGAIFIAL. Residues 30 to 53 are Lumenal-facing; that stretch reads SSSRILLVKYSANEENKYDYLPTT. A helical membrane pass occupies residues 54–74; it reads ANVCSELVKLVFCVLVSFCVI. Residues 75–93 are Cytoplasmic-facing; the sequence is KKDHQSRNLKYASWKEFSN. Residues 94-116 traverse the membrane as a helical segment; it reads FMKWSIPAFLYFLDNLIVFYVLS. The Lumenal segment spans residues 117 to 119; the sequence is YLQ. A helical transmembrane segment spans residues 120 to 142; the sequence is PAMAVIFSNFSIITTALLFRIVL. Residues 143–147 are Cytoplasmic-facing; it reads KRRLN. The chain crosses the membrane as a helical span at residues 148-168; sequence WIQWASLLILFLSIVALTAGT. The Lumenal portion of the chain corresponds to 169–228; sequence KTLQHNLAGHGFHHDAFFSPSNSCLLFRSECPRKDNCTAKEWTFPEAKWNTTARVFSHIR. N-linked (GlcNAc...) asparagine glycosylation is present at asparagine 204. Residues 229–249 form a helical membrane-spanning segment; that stretch reads LGMGHVLIIVQCFISSMANIY. The Cytoplasmic portion of the chain corresponds to 250 to 263; it reads NEKILKEGNQLAES. The helical transmembrane segment at 264-284 threads the bilayer; that stretch reads IFIQNSKLYFFGILFNGLTLG. Residues 285–303 are Lumenal-facing; it reads LQRSNRDQIKNCGFFYGHN. A helical membrane pass occupies residues 304–324; it reads AFSVALIFVTAFQGLSVAFIL. Residues 325 to 330 are Cytoplasmic-facing; that stretch reads KFLDNM. The chain crosses the membrane as a helical span at residues 331–351; sequence FHVLMAQVTTVIITTVSVLVF. At 352-354 the chain is on the lumenal side; it reads DFR. A helical membrane pass occupies residues 355-375; the sequence is PSLEFFLEAPSVLLSIFIYNA. The Cytoplasmic segment spans residues 376-424; sequence SKPQGPEYAPRQERIRDLSGNLWERSSGDGEELERLTKPKSDESDEDTF. A phosphoserine mark is found at serine 394, serine 416, and serine 419. Positions 395–424 are disordered; the sequence is GNLWERSSGDGEELERLTKPKSDESDEDTF. A compositionally biased stretch (basic and acidic residues) spans 408–417; the sequence is LERLTKPKSD.

The protein belongs to the nucleotide-sugar transporter family. SLC35A subfamily. As to quaternary structure, probably forms homooligomers and heterooligomers with SLC35A1, SLC35A2, SLC35A3 and SLC35A4.

It localises to the golgi apparatus membrane. It catalyses the reaction UMP(out) + UDP-alpha-D-glucuronate(in) = UMP(in) + UDP-alpha-D-glucuronate(out). It carries out the reaction UMP(out) + UDP-N-acetyl-alpha-D-glucosamine(in) = UMP(in) + UDP-N-acetyl-alpha-D-glucosamine(out). The enzyme catalyses UDP-N-acetyl-alpha-D-galactosamine(in) + UMP(out) = UDP-N-acetyl-alpha-D-galactosamine(out) + UMP(in). Functionally, probable UDP-sugar:UMP transmembrane antiporter involved in UDP-alpha-D-glucuronate/UDP-GlcA, UDP-GlcNAc/UDP-N-acetyl-alpha-D-glucosamine and UDP-N-acetyl-alpha-D-galactosamine/UDP-GalNAc transport from the cytosol to the lumen of the Golgi. The polypeptide is UDP-sugar transporter protein SLC35A5 (Pongo abelii (Sumatran orangutan)).